The following is a 915-amino-acid chain: Coiled-coil domain-containing protein 57 (915 aa).

The segment at methionine 1–glutamine 502 is centrosomal targeting domain. 4 coiled-coil regions span residues valine 92 to glutamate 173, leucine 214 to aspartate 422, lysine 456 to glutamate 483, and isoleucine 521 to glutamine 548. Disordered regions lie at residues threonine 555–alanine 574, proline 606–proline 653, and glutamine 724–aspartate 915. Positions proline 606 to aspartate 915 are microtubule binding domain. The segment covering histidine 613 to threonine 627 has biased composition (polar residues). Low complexity predominate over residues glycine 628–glycine 652. Positions glycine 745–serine 758 are enriched in basic and acidic residues. Composition is skewed to polar residues over residues proline 781–serine 794, serine 819–leucine 830, and serine 841–serine 852. The segment covering lysine 879–alanine 891 has biased composition (low complexity).

Interacts with CEP63; the interaction is required for their location to proximal end of centrioles. Interacts with microtubules.

It localises to the cytoplasm. The protein localises to the cytoskeleton. Its subcellular location is the microtubule organizing center. The protein resides in the centrosome. It is found in the centriolar satellite. It localises to the centriole. The protein localises to the spindle. Pleiotropic regulator of centriole duplication, mitosis, and ciliogenesis. Critical interface between centrosome and microtubule-mediated cellular processes. Centriole duplication protein required for recruitment of CEP63, CEP152, and PLK4 to the centrosome. Independent of its centrosomal targeting, localizes to and interacts with microtubules and regulates microtubule nucleation, stability, and mitotic progression. This is Coiled-coil domain-containing protein 57 from Homo sapiens (Human).